Consider the following 1094-residue polypeptide: Centrosomal protein of 128 kDa (1094 aa).

The interval 1 to 29 (MAESSSESDHFRCRDRLSPWAARSTHRGT) is disordered. The segment covering 7–17 (ESDHFRCRDRL) has biased composition (basic and acidic residues). Phosphoserine is present on Ser31. The disordered stretch occupies residues 115 to 140 (DGGTGSELHHFPPTSPLKDYGDPQGI). Coiled coils occupy residues 190 to 827 (SRSD…QESI) and 879 to 959 (EELK…IALE). Ser249, Ser291, and Ser331 each carry phosphoserine. The disordered stretch occupies residues 319–345 (AEGDRKGLQHQVSQISKQQSNYQDEQG). Polar residues predominate over residues 328-342 (HQVSQISKQQSNYQD). Residues 987–999 (DSCSSSERTDGRY) show a composition bias toward basic and acidic residues. Positions 987 to 1018 (DSCSSSERTDGRYSKYRVRRNSLQHHQDDTKY) are disordered. Positions 1000–1009 (SKYRVRRNSL) are enriched in basic residues. Ser1061 carries the post-translational modification Phosphoserine. The disordered stretch occupies residues 1067–1094 (VAPDSASNKEDATMNGTSSQPKKEEYGS).

It localises to the cytoplasm. The protein localises to the cytoskeleton. It is found in the microtubule organizing center. Its subcellular location is the centrosome. The protein resides in the centriole. It localises to the spindle pole. This chain is Centrosomal protein of 128 kDa (CEP128), found in Homo sapiens (Human).